We begin with the raw amino-acid sequence, 367 residues long: MSETLVVKIGTSSLTNPHHPGLALSTIAGLVEVICQLRRQGYNVVLVSSGAVGVGCTRLGLRDRPSRIAQRQAIAAVGQGRLMRTYDDLFTTLGQPIAQVLLTRGDLAQRQRYINAYQTFQELFELGVVPIVNENDTVAVEELKFGDNDTLSALVASLVEAQWLFLLTDVDRLYTADPRQDPNAKPITIVHDLSELESIQAGGQGSRWGTGGMATKLTAAKIATQASVRTVITQGRSPENLLKILAGEAIGTWFEPQPETVNARKRWIAHGLVPTGKLLLDAGAVQAIQAGGKSLLAAGIQAIEGDFEAQDAVQLCDLNGTEIARGLVNYDSHELQQIRGCQSDQIVQILGYEGAETIVHRDNLVLS.

Lysine 8 contributes to the ATP binding site. Substrate-binding residues include serine 49, aspartate 136, and asparagine 148. ATP is bound by residues 168–169 and 210–216; these read TD and TGGMATK. A PUA domain is found at 275-353; it reads TGKLLLDAGA…DQIVQILGYE (79 aa).

The protein belongs to the glutamate 5-kinase family.

Its subcellular location is the cytoplasm. The enzyme catalyses L-glutamate + ATP = L-glutamyl 5-phosphate + ADP. Its pathway is amino-acid biosynthesis; L-proline biosynthesis; L-glutamate 5-semialdehyde from L-glutamate: step 1/2. Its function is as follows. Catalyzes the transfer of a phosphate group to glutamate to form L-glutamate 5-phosphate. This chain is Glutamate 5-kinase, found in Synechococcus elongatus (strain ATCC 33912 / PCC 7942 / FACHB-805) (Anacystis nidulans R2).